A 79-amino-acid polypeptide reads, in one-letter code: D-alanyl carrier protein (79 aa).

Residues 1 to 77 form the Carrier domain; the sequence is MDIKSEVLAI…KIVAGVTELC (77 aa). Ser-35 is subject to O-(pantetheine 4'-phosphoryl)serine.

It belongs to the DltC family. 4'-phosphopantetheine is transferred from CoA to a specific serine of apo-DCP.

The protein resides in the cytoplasm. The protein operates within cell wall biogenesis; lipoteichoic acid biosynthesis. Carrier protein involved in the D-alanylation of lipoteichoic acid (LTA). The loading of thioester-linked D-alanine onto DltC is catalyzed by D-alanine--D-alanyl carrier protein ligase DltA. The DltC-carried D-alanyl group is further transferred to cell membrane phosphatidylglycerol (PG) by forming an ester bond, probably catalyzed by DltD. D-alanylation of LTA plays an important role in modulating the properties of the cell wall in Gram-positive bacteria, influencing the net charge of the cell wall. In Streptococcus agalactiae serotype Ia (strain ATCC 27591 / A909 / CDC SS700), this protein is D-alanyl carrier protein.